The chain runs to 699 residues: Polyribonucleotide nucleotidyltransferase (699 aa).

2 residues coordinate Mg(2+): Asp-487 and Asp-493. The region spanning 554–613 (PRMLNMKINPEKIRDVIGKGGAVIRALQEETGTVIEIEDDGSITISSVSAEGAQKAKARI) is the KH domain. The S1 motif domain occupies 623 to 691 (GKVYEGTVVR…ERGKIRLSMK (69 aa)).

The protein belongs to the polyribonucleotide nucleotidyltransferase family. Requires Mg(2+) as cofactor.

It is found in the cytoplasm. It carries out the reaction RNA(n+1) + phosphate = RNA(n) + a ribonucleoside 5'-diphosphate. Functionally, involved in mRNA degradation. Catalyzes the phosphorolysis of single-stranded polyribonucleotides processively in the 3'- to 5'-direction. The polypeptide is Polyribonucleotide nucleotidyltransferase (Azoarcus sp. (strain BH72)).